The primary structure comprises 159 residues: Heterocyst differentiation protein HetP (159 aa).

The required to complement a hetP deletion stretch occupies residues 1-50; that stretch reads MNQNTTGITNYNKAINPQQFDKVVEAILAGKYSWACVLMLRFAGYNPMHY.

The protein belongs to the HetP family. As to quaternary structure, in bacterial two-hybrid assays interacts weakly with Asl1930, Alr2902 and Alr3234.

Promotes heterocyst differentiation and commitment when nitrogen is limiting. Interplay between the 4 HetP paralogs controls the timing of commitment to heterocyst formation and its duration. Epistatic analysis show that the 3 paralogs act upstream of hetP to delay commitment (asl1930, alr3234) or inhibit development (alr2902). Asl1930 and Alr3234 must also attenuate the activity of Alr2902. Required for heterocyst formation. Functions directly downstream of master regulator HetR to promote heterocyst differentiation, functioning downstream of patterning (cell choice). Partially functionally redundant with homologs alr2902 and asl1930 but not alr3234. Overexpression leads to more than wild-type levels of heterocysts. Overexpression in the absence of hetR partially bypasses hetR deletion, allowing differentiation of heterocysts, although they only fix nitrogen in the absence of oxygen (a Fox- Fix+ phenotype), suggesting they are not fully. The protein is Heterocyst differentiation protein HetP of Nostoc sp. (strain PCC 7120 / SAG 25.82 / UTEX 2576).